A 565-amino-acid polypeptide reads, in one-letter code: CTP synthase (565 aa).

The amidoligase domain stretch occupies residues 1–268; sequence MQTKYIFVTG…GELVVDRFYP (268 aa). A CTP-binding site is contributed by serine 14. Position 14 (serine 14) interacts with UTP. 15–20 is an ATP binding site; it reads SLGKGI. Position 55 (tyrosine 55) interacts with L-glutamine. ATP is bound at residue aspartate 72. Aspartate 72 and glutamate 142 together coordinate Mg(2+). Residues 149-151, 189-194, and lysine 225 each bind CTP; these read DIE and KTKPTQ. UTP contacts are provided by residues 189–194 and lysine 225; that span reads KTKPTQ. In terms of domain architecture, Glutamine amidotransferase type-1 spans 301–543; the sequence is PIALVGKYVE…VRACTAYAHE (243 aa). Glycine 363 is a binding site for L-glutamine. The Nucleophile; for glutamine hydrolysis role is filled by cysteine 390. L-glutamine-binding positions include 391–394, glutamate 414, and arginine 471; that span reads LGLQ. Catalysis depends on residues histidine 516 and glutamate 518. Positions 545-565 are disordered; sequence DLVTSPQPPERKAVPLASVDM.

It belongs to the CTP synthase family. In terms of assembly, homotetramer.

It carries out the reaction UTP + L-glutamine + ATP + H2O = CTP + L-glutamate + ADP + phosphate + 2 H(+). The catalysed reaction is L-glutamine + H2O = L-glutamate + NH4(+). It catalyses the reaction UTP + NH4(+) + ATP = CTP + ADP + phosphate + 2 H(+). It participates in pyrimidine metabolism; CTP biosynthesis via de novo pathway; CTP from UDP: step 2/2. Its activity is regulated as follows. Allosterically activated by GTP, when glutamine is the substrate; GTP has no effect on the reaction when ammonia is the substrate. The allosteric effector GTP functions by stabilizing the protein conformation that binds the tetrahedral intermediate(s) formed during glutamine hydrolysis. Inhibited by the product CTP, via allosteric rather than competitive inhibition. Functionally, catalyzes the ATP-dependent amination of UTP to CTP with either L-glutamine or ammonia as the source of nitrogen. Regulates intracellular CTP levels through interactions with the four ribonucleotide triphosphates. The sequence is that of CTP synthase from Salinibacter ruber (strain DSM 13855 / M31).